The following is a 253-amino-acid chain: 5'-nucleotidase SurE 2 (253 aa).

A divalent metal cation contacts are provided by aspartate 8, aspartate 9, serine 39, and asparagine 92.

It belongs to the SurE nucleotidase family. A divalent metal cation is required as a cofactor.

The protein localises to the cytoplasm. It catalyses the reaction a ribonucleoside 5'-phosphate + H2O = a ribonucleoside + phosphate. Nucleotidase that shows phosphatase activity on nucleoside 5'-monophosphates. The polypeptide is 5'-nucleotidase SurE 2 (Burkholderia lata (strain ATCC 17760 / DSM 23089 / LMG 22485 / NCIMB 9086 / R18194 / 383)).